A 267-amino-acid chain; its full sequence is Glucosamine-6-phosphate deaminase (267 aa).

Catalysis depends on Asp72, which acts as the Proton acceptor; for enolization step. Asp141 acts as the For ring-opening step in catalysis. The active-site Proton acceptor; for ring-opening step is His143. Glu148 serves as the catalytic For ring-opening step.

It belongs to the glucosamine/galactosamine-6-phosphate isomerase family. NagB subfamily. In terms of assembly, homohexamer.

It carries out the reaction alpha-D-glucosamine 6-phosphate + H2O = beta-D-fructose 6-phosphate + NH4(+). It participates in amino-sugar metabolism; N-acetylneuraminate degradation; D-fructose 6-phosphate from N-acetylneuraminate: step 5/5. Its activity is regulated as follows. Allosterically activated by N-acetylglucosamine 6-phosphate (GlcNAc6P). Functionally, catalyzes the reversible isomerization-deamination of glucosamine 6-phosphate (GlcN6P) to form fructose 6-phosphate (Fru6P) and ammonium ion. The sequence is that of Glucosamine-6-phosphate deaminase from Pasteurella multocida (strain Pm70).